A 237-amino-acid chain; its full sequence is LexA repressor (237 aa).

A DNA-binding region (H-T-H motif) is located at residues 26–46 (FDEMKEALDLRSKSGIHRLIT). Catalysis depends on for autocatalytic cleavage activity residues S158 and K196.

The protein belongs to the peptidase S24 family. In terms of assembly, homodimer.

It carries out the reaction Hydrolysis of Ala-|-Gly bond in repressor LexA.. In terms of biological role, represses a number of genes involved in the response to DNA damage (SOS response), including recA and lexA. In the presence of single-stranded DNA, RecA interacts with LexA causing an autocatalytic cleavage which disrupts the DNA-binding part of LexA, leading to derepression of the SOS regulon and eventually DNA repair. This is LexA repressor from Xanthobacter autotrophicus (strain ATCC BAA-1158 / Py2).